Reading from the N-terminus, the 567-residue chain is NADH-ubiquinone oxidoreductase chain 2 (567 aa).

14 helical membrane-spanning segments follow: residues 2 to 22 (LILS…IDTI), 43 to 63 (IGII…LSYI), 85 to 105 (NIFN…LLSI), 133 to 153 (LNIY…LLLT), 158 to 178 (ISIF…TGII), 189 to 209 (LFYY…ISLL), 236 to 256 (ILIG…AAPM), 274 to 294 (YISL…ILNL), 312 to 332 (LIYI…IGGL), 340 to 360 (ILAY…LSLI), 372 to 392 (IIYI…LIIA), 423 to 443 (LIFC…LFGF), 459 to 479 (LFLS…YLYF), and 530 to 550 (VGNY…FNFI).

It belongs to the complex I subunit 2 family.

The protein resides in the mitochondrion inner membrane. The enzyme catalyses a ubiquinone + NADH + 5 H(+)(in) = a ubiquinol + NAD(+) + 4 H(+)(out). Its function is as follows. Core subunit of the mitochondrial membrane respiratory chain NADH dehydrogenase (Complex I) that is believed to belong to the minimal assembly required for catalysis. Complex I functions in the transfer of electrons from NADH to the respiratory chain. The immediate electron acceptor for the enzyme is believed to be ubiquinone. This Wickerhamomyces canadensis (Yeast) protein is NADH-ubiquinone oxidoreductase chain 2 (ND2).